The primary structure comprises 280 residues: Undecaprenyl-diphosphatase (280 aa).

The next 8 helical transmembrane spans lie at 1-21 (MTIL…FLPV), 41-61 (FVRA…LVLY), 87-107 (FDLY…GFLF), 115-135 (LGSV…MLFV), 147-167 (ITYP…FLPG), 186-206 (KAAA…ATLL), 225-245 (IVLL…IKFF), and 260-280 (YRIL…SLAV).

This sequence belongs to the UppP family.

The protein localises to the cell inner membrane. The catalysed reaction is di-trans,octa-cis-undecaprenyl diphosphate + H2O = di-trans,octa-cis-undecaprenyl phosphate + phosphate + H(+). In terms of biological role, catalyzes the dephosphorylation of undecaprenyl diphosphate (UPP). Confers resistance to bacitracin. This chain is Undecaprenyl-diphosphatase, found in Porphyromonas gingivalis (strain ATCC 33277 / DSM 20709 / CIP 103683 / JCM 12257 / NCTC 11834 / 2561).